Reading from the N-terminus, the 300-residue chain is Ribosomal protein bS6--L-glutamate ligase (300 aa).

Residues 104–287 form the ATP-grasp domain; the sequence is LQLLARQGID…IAGRMIQWIE (184 aa). Residues K141, 178-179, D187, and 211-213 contribute to the ATP site; these read EY and RSN. Mg(2+)-binding residues include D248, E260, and N262. D248, E260, and N262 together coordinate Mn(2+).

Belongs to the RimK family. Mg(2+) is required as a cofactor. It depends on Mn(2+) as a cofactor.

Its function is as follows. An L-glutamate ligase that catalyzes the ATP-dependent post-translational addition of glutamate residues to the C-terminus of ribosomal protein bS6 (RpsF). Is also able to catalyze the synthesis of poly-alpha-glutamate in vitro, via ATP hydrolysis from unprotected glutamate as substrate. The number of glutamate residues added to either RpsF or to poly-alpha-glutamate changes with pH. This chain is Ribosomal protein bS6--L-glutamate ligase, found in Salmonella schwarzengrund (strain CVM19633).